A 391-amino-acid chain; its full sequence is GTPase Obg (391 aa).

Residues 1 to 159 (MKFIDEALIR…RDLLLELMLL (159 aa)) form the Obg domain. The 174-residue stretch at 160-333 (ADVGMLGLPN…LTRDIMDFIE (174 aa)) folds into the OBG-type G domain. GTP contacts are provided by residues 166–173 (GLPNAGKS), 191–195 (FTTLV), 213–216 (DIPG), 283–286 (NKID), and 314–316 (SAA). Serine 173 and threonine 193 together coordinate Mg(2+).

It belongs to the TRAFAC class OBG-HflX-like GTPase superfamily. OBG GTPase family. Monomer. The cofactor is Mg(2+).

Its subcellular location is the cytoplasm. In terms of biological role, an essential GTPase which binds GTP, GDP and possibly (p)ppGpp with moderate affinity, with high nucleotide exchange rates and a fairly low GTP hydrolysis rate. Plays a role in control of the cell cycle, stress response, ribosome biogenesis and in those bacteria that undergo differentiation, in morphogenesis control. The protein is GTPase Obg of Haemophilus ducreyi (strain 35000HP / ATCC 700724).